The following is a 270-amino-acid chain: ATP synthase subunit b 1 (270 aa).

A helical transmembrane segment spans residues leucine 2–leucine 22.

This sequence belongs to the ATPase B chain family. As to quaternary structure, F-type ATPases have 2 components, F(1) - the catalytic core - and F(0) - the membrane proton channel. F(1) has five subunits: alpha(3), beta(3), gamma(1), delta(1), epsilon(1). F(0) has three main subunits: a(1), b(2) and c(10-14). The alpha and beta chains form an alternating ring which encloses part of the gamma chain. F(1) is attached to F(0) by a central stalk formed by the gamma and epsilon chains, while a peripheral stalk is formed by the delta and b chains.

The protein localises to the cell inner membrane. In terms of biological role, f(1)F(0) ATP synthase produces ATP from ADP in the presence of a proton or sodium gradient. F-type ATPases consist of two structural domains, F(1) containing the extramembraneous catalytic core and F(0) containing the membrane proton channel, linked together by a central stalk and a peripheral stalk. During catalysis, ATP synthesis in the catalytic domain of F(1) is coupled via a rotary mechanism of the central stalk subunits to proton translocation. Its function is as follows. Component of the F(0) channel, it forms part of the peripheral stalk, linking F(1) to F(0). The polypeptide is ATP synthase subunit b 1 (Marinomonas sp. (strain MWYL1)).